The following is a 213-amino-acid chain: Motile sperm domain-containing protein 1 (213 aa).

Residues 16–143 (PVFVFPTELI…KEHLTESVFF (128 aa)) form the MSP domain. The next 2 membrane-spanning stretches (helical) occupy residues 159 to 179 (SLLT…PTLG) and 191 to 211 (LSVN…MAIL). The Nuclear export signal signature appears at 205-208 (LITM).

Its subcellular location is the endoplasmic reticulum membrane. It localises to the golgi apparatus membrane. Functionally, plays a role in differentiation and/or proliferation of mesenchymal stem cells. Proposed to be involved in epithelial-to-mesenchymal transition (EMT). However, another study suggests that it is not required for EMT or stem cell self-renewal and acts during later stages of differentiation. This is Motile sperm domain-containing protein 1 (Mospd1) from Rattus norvegicus (Rat).